Consider the following 2153-residue polypeptide: MEKYREIHQRVKEIPPGGASALECLDLLDRLYAVRHDVVDQMIKHDWSDNKDMERPIGQVLLMAGVPNDVIQGMEKKVIPTSPSGQILKSFFRMTPDNYKITGALIEFIEVTVTADVAKGIREKKLKYESGLQFVESLLSQEHKKGNINQAYKITFDVVAVKTDGSNISTQWPSRRNDGVVQHMRLVQADINYVREHLIKPDERASLEAMFNLKFHVGGPKLRYFNIPDYKPQSLCQPEITNLIQYCKHWLTEDHDFVFKEVTGNNVMNSFENNESVYMSRYRESRKPRNFLLIQGSIQGPYLPSTISSDQCDTRIGCLEVLKVHPETPVQAIAVDMAYKYMELNRDEIINYYNPRVHFQATQSVKEPGTFKLGLSQLNPMSKSILDQVGKHKSEKGLFGEPLESINISSQIQQNECSRIIESILSNLEINVGEVTMSLANPRKTTGVDELLGKFYENELSKYLISILRKTAAWHIGHLIRDITESLIAHAGLKRSKYWSIHAYDHGGVILFILPSKSLEVVGSYIRYFTVFKDGIGLIDEENLDSKVDIDGVQWCFSKVMSIDLNRLLALNIAFEKALLATATWFQYYTEDQGHFPLQHALRSVFSFHFLLCVSQKMKICAIFDNLRYLIPAVTSLYSGYELLIEKFFERPFKSALEVYLYNIIKALLISLAQNNKVRFYSKVRLLGLTVDHSTVGASGVYPSLMSRVVYKHYRSLISEATTCFFLFEKGLHGNLNEEAKIHLETVEWARKFEAKERKYGDILMREGYTIDAIRVGDVQVEQQLFCQEVVELSAEELNKYLQAKSQVLSSNIMNKHWDKPYFSQTRNISLKGMSGALQEDGHLAASVTLIEAIRFLNRSQTNPNVIDMYEQTKQHKAQARIVRKYQRTEADRGFFITTLPTRVRLEIIEDYYDAIARVVPEEYISYGGDKKILNIQTALEKALRWASGSSEVITSTGNVIKFKRRLMYVSADATKWSPGDNSAKFKRFTQALYDGLSDEKLKCCVVDALRHVYETEFFMSRKLHRYIDSMDEHSEAVQDFLDFFKGGVSATVKGNWLQGNLNKCSSLFGAAVSLLFRRIWAELFPELECFFEFAHHSDDALFIYGYLEPEDDGTDWFLYVSQQIQAGNYHWHAVNQEMWKSMFNLHEHLLLMGSIKVSPKKTTVSPTNAEFLSTFFEGCAVSIPFIKILLGSLSDLPGLGFFDDLAAAQSRCVKAMDLGASPQLAQLAVVICTSKVERLYGTADGMVNSPVAFLKVTKAHVPIPLGGDGSMSIMELATAGIGMADKNILKQAFYSYKHTRRDGDRYVLGLFKFLMSLSEDVFQHDRLGEFSFVGKVQWKVFTPKNEFEFFDQFSQSYLKSWTNQHPVYDYIIPRGRDNLLVYLVRKLNDPSIVTAMTMQSPLQLRFRMQAKQHMKVCKLEGEWVTFREVLAAADSFATKYNPTEKDLDLFNTLVSCTFSKEYAWKDFLNEVRCEVVPTKHVHRSKIARTFTVREKDQAIQNPITAVIGYKYASTVDEISDVLDSSFFPDSLSADLQVMKEGVYRELGLDIGLPEVLKRIAPLLYKAGRSRVVIVEGNVEGTAESICSYWLRSMSLVKTIKVRPKKEVLRAVSLYSTKENIGLQDDVAATRLCIEVWRWCKANDQNVNDWLNALYFEKQTLMDWVERFRRKGVVPIDPEIQCIALLLYDVLGYKSVLQMQANRRAYSGKQYDAYCVQTYNEETRLYEGDLRVTFNFGLDCARLEIFWDKKEYILETSITQRHVLKLMMEEVTQELLRCGMRFKTEQVSHTRSLVLFKTESGFEWGKPNVPCIVFKHCALRTGLRTKQAINKEFMINVQADGFRAIAQMDMESPRFLLAHAYHTLRDVRYQAVQAVGNVWFQTAQHKLFINPIISSGLLENFMKGLPAAIPPAAYSLIMNKAKISVDLFMFNELLALVNPRNVLNLDGIEETSEGYSTVTSISSRQWSEEVSLMADDDIDDEEEFTIALDDIDFEQINLDEDIQHFLQDESAYTGDLTIQTEEVEVKRIRGVTRVLEPVKLIKSWVSKGLAIDKVYNPIGIVLMARYMSKNYDFSKIPLALLNPYDLTEFESVVKGWGETVNDRFLEVDNDAQRLVREKNILPEDILPDSLFSFRHVDVLLKRLFPHDPVSSFY.

Mn(2+) contacts are provided by His-36, Glu-54, Asp-97, Glu-110, and Val-111. The active-site For endonuclease activity is the Lys-124. One can recognise a RdRp catalytic domain in the interval Thr-957–Met-1143. Asp-1100 is a Mg(2+) binding site. Positions Lys-1291–Tyr-2153 are interaction with the viral nucleoprotein.

It belongs to the Bunyavirales RNA polymerase family. In terms of assembly, interacts with the viral nucleoprotein; this interaction is required for RdRp function. It depends on Mn(2+) as a cofactor. Mg(2+) serves as cofactor.

The protein resides in the host cytoplasm. Its subcellular location is the host perinuclear region. It catalyses the reaction RNA(n) + a ribonucleoside 5'-triphosphate = RNA(n+1) + diphosphate. Functionally, RNA-dependent RNA polymerase, which is responsible for the replication and transcription of the viral RNA genome using antigenomic RNA as an intermediate. During transcription, synthesizes subgenomic RNAs and assures their capping by a cap-snatching mechanism, which involves the endonuclease activity cleaving the host capped pre-mRNAs. These short capped RNAs are then used as primers for viral transcription. Cleaves ssRNA substrates but not DNA. Seems to downregulate the expression of its own and heterologous mRNAs through its endonuclease activity. This is RNA-directed RNA polymerase L from Sin Nombre orthohantavirus (SNV).